The following is a 690-amino-acid chain: MLRGQEERKYSIRKYSIGVVSVLAATMFVVSSHEAQASEKTPTNAAVQKETLNQPGEQGNAITSHQMQSGKQLDDMHKENGKSGTVTEGKDTLQLSKYQSTQNSKTIRTQNDNQVKQDSERQGSKQSHQNNATNNTERQNDQVQNTHHAERNGSQSTTSQSNDVDKSQPSIPAQKVLPNHDKAAPTSTTPPSNDKTAPKSTKAQDATTDKHPNQQDTHQPAHQIIDAKQDDTVRQSEQKPQVGDLSKHIDGQNSPEKPTDKNTDNKQLIKDALQAPKTRSTTNAAADAKKVRPLKANQVQPLNKYPVVFVHGFLGLVGDNAPALYPNYWGGNKFKVIEELRKQGYNVHQASVSAFGSNYDRAVELYYYIKGGRVDYGAAHAAKYGHERYGKTYKGIMPNWEPGKKVHLVGHSMGGQTIRLMEEFLRNGNKEEIAYHKAHGGEISPLFTGGHNNMVASITTLATPHNGSQAADKFGNTEAVRKIMFALNRFMGNKYSNIDLGLTQWGFKQLPNESYIDYIKRVSKSKIWTSDDNAAYDLTLDGSAKLNNMTSMNPNITYTTYTGVSSHTGPLGYENPDLGTFFLMDTTSRIIGHDAREEWRKNDGVVPVISSLHPSNQPFVNVTNDEPATRRGIWQVKPIIQGWDHVDFIGVDFLDFKRKGAELANFYTGIINDLLRVEATESKGTQLKAS.

A signal peptide spans 1–37 (MLRGQEERKYSIRKYSIGVVSVLAATMFVVSSHEAQA). Positions 38-295 (SEKTPTNAAV…ADAKKVRPLK (258 aa)) are excised as a propeptide. Residues 53 to 71 (NQPGEQGNAITSHQMQSGK) show a composition bias toward polar residues. A disordered region spans residues 53-266 (NQPGEQGNAI…KPTDKNTDNK (214 aa)). Residues 72 to 81 (QLDDMHKENG) show a composition bias toward basic and acidic residues. 3 stretches are compositionally biased toward polar residues: residues 93–114 (LQLS…NDNQ), 124–171 (SKQS…QPSI), and 185–206 (PTST…AQDA). 2 stretches are compositionally biased toward basic and acidic residues: residues 225 to 237 (IDAK…RQSE) and 257 to 266 (KPTDKNTDNK). The active-site Nucleophile is S412. G579 is a Ca(2+) binding site. The active-site Charge relay system is the D603. A Ca(2+)-binding site is contributed by D644. The Charge relay system role is filled by H645. Ca(2+)-binding residues include D647, D652, and D655.

The protein belongs to the AB hydrolase superfamily. Lipase family.

Its subcellular location is the secreted. It catalyses the reaction a triacylglycerol + H2O = a diacylglycerol + a fatty acid + H(+). The sequence is that of Lipase 2 (lip2) from Staphylococcus aureus (strain MSSA476).